Consider the following 289-residue polypeptide: Acetyl-coenzyme A carboxylase carboxyl transferase subunit beta 2 (289 aa).

One can recognise a CoA carboxyltransferase N-terminal domain in the interval 25–289 (VWTKCPSCDQ…TNTSIRLEVK (265 aa)). Positions 29, 32, 48, and 51 each coordinate Zn(2+). A C4-type zinc finger spans residues 29–51 (CPSCDQVLYRIALKENLEVCPKC).

The protein belongs to the AccD/PCCB family. In terms of assembly, acetyl-CoA carboxylase is a heterohexamer composed of biotin carboxyl carrier protein (AccB), biotin carboxylase (AccC) and two subunits each of ACCase subunit alpha (AccA) and ACCase subunit beta (AccD). Zn(2+) serves as cofactor.

The protein resides in the cytoplasm. The catalysed reaction is N(6)-carboxybiotinyl-L-lysyl-[protein] + acetyl-CoA = N(6)-biotinyl-L-lysyl-[protein] + malonyl-CoA. It functions in the pathway lipid metabolism; malonyl-CoA biosynthesis; malonyl-CoA from acetyl-CoA: step 1/1. Functionally, component of the acetyl coenzyme A carboxylase (ACC) complex. Biotin carboxylase (BC) catalyzes the carboxylation of biotin on its carrier protein (BCCP) and then the CO(2) group is transferred by the transcarboxylase to acetyl-CoA to form malonyl-CoA. This Vibrio parahaemolyticus serotype O3:K6 (strain RIMD 2210633) protein is Acetyl-coenzyme A carboxylase carboxyl transferase subunit beta 2.